Here is a 94-residue protein sequence, read N- to C-terminus: Aspartyl/glutamyl-tRNA(Asn/Gln) amidotransferase subunit C (94 aa).

It belongs to the GatC family. Heterotrimer of A, B and C subunits.

The enzyme catalyses L-glutamyl-tRNA(Gln) + L-glutamine + ATP + H2O = L-glutaminyl-tRNA(Gln) + L-glutamate + ADP + phosphate + H(+). It catalyses the reaction L-aspartyl-tRNA(Asn) + L-glutamine + ATP + H2O = L-asparaginyl-tRNA(Asn) + L-glutamate + ADP + phosphate + 2 H(+). In terms of biological role, allows the formation of correctly charged Asn-tRNA(Asn) or Gln-tRNA(Gln) through the transamidation of misacylated Asp-tRNA(Asn) or Glu-tRNA(Gln) in organisms which lack either or both of asparaginyl-tRNA or glutaminyl-tRNA synthetases. The reaction takes place in the presence of glutamine and ATP through an activated phospho-Asp-tRNA(Asn) or phospho-Glu-tRNA(Gln). In Caldicellulosiruptor saccharolyticus (strain ATCC 43494 / DSM 8903 / Tp8T 6331), this protein is Aspartyl/glutamyl-tRNA(Asn/Gln) amidotransferase subunit C.